The sequence spans 320 residues: Putative sporulation hydrolase CotR (320 aa).

Positions 7-182 (MTFDGGGTLG…VATNPSTASI (176 aa)) constitute a PNPLA domain. Residues 11–16 (GGGTLG) carry the GXGXXG motif. A GXSXG motif is present at residues 42–46 (GNSIG). Residue Ser44 is the Nucleophile of the active site. The active-site Proton acceptor is Asp169.

The protein localises to the spore coat. In Bacillus subtilis (strain 168), this protein is Putative sporulation hydrolase CotR (cotR).